Consider the following 852-residue polypeptide: MEYERRGGRGDRTGRYGATDRSQDDGGENRSRDHDYRDMDYRSYPREYGSQEGKHEYDDSSEEQSAEIRGQLQSHGVQAREVRLMRNKSSGQSRGFAFVEFSHLQDATRWMEANQHSLNILGQKVSMHYSDPKPKINEDWLCNKCGVQNFKRREKCFKCGVPKSEAEQKLPLGTRLDQQALPLGGRELSQGLLPLPQPYQAQGVLTSQALSQGSEPSSENANDTIILRNLNPHSTMDSILGALAPYAVLSSSNVRVIKDKQTQLNRGFAFIQLSTIVEAAQLLQILQALHPPLTIDGKTINVEFAKGSKRDMASNEGSRINAASVASTAIAAAQWAISQASQGGESTWAAPEEPPVDYSYYQQDEGYGSSQGTDSLYAHGYLKNTKGPGMTGTKGDTSGAGPETSLEGGTDSVSLQAFSRAQPGAAPGLYQQSAEGSSGQGTATNSQSYTIMSPAVLKSELQSPTHPSSALPPATSPTAPESYSQYPVPDVSTYQYDETSGYYYDPQTGLYYDPNSQYYYNAQSQQYLYWDGERRTYIPALEQSADGHKDTGASSKEGKEKKEKHKTKTAQQIAKDMERWARSLNKQKENFKNSFQPISALRDDERRESATADAGYAILEKKGALAERQHTSMDLPKLASDDRPSPPRGLVAAYSGESDSEEEQERGGPEREEKLTDWQKLACLLCRRQFPSKEALIRHQQLSGLHKQNLEIHRRAHLSENELEALEKNDMEQMKYRDRAAERREKYGIPEPPEPKRRKYGGISTASVDFEQPTRDGLGSDNIGSRMLQAMGWKEGSGLGRKKQGIVTPIEAQTRVRGSGLGARGSSYGVTSTESYKETLHKTMVTRFNEAQ.

2 stretches are compositionally biased toward basic and acidic residues: residues 1 to 14 (MEYERRGGRGDRTG) and 21 to 45 (RSQDDGGENRSRDHDYRDMDYRSYP). The interval 1 to 78 (MEYERRGGRG…RGQLQSHGVQ (78 aa)) is disordered. The RRM 1 domain occupies 37 to 132 (RDMDYRSYPR…QKVSMHYSDP (96 aa)). At serine 61 the chain carries Phosphoserine. The RanBP2-type zinc-finger motif lies at 135–165 (KINEDWLCNKCGVQNFKRREKCFKCGVPKSE). Residues 223–307 (DTIILRNLNP…KTINVEFAKG (85 aa)) enclose the RRM 2 domain. N6-acetyllysine is present on lysine 306. Disordered regions lie at residues 343–365 (GGESTWAAPEEPPVDYSYYQQDE), 386–410 (KGPGMTGTKGDTSGAGPETSLEGGT), 426–446 (APGLYQQSAEGSSGQGTATNS), 459–489 (SELQSPTHPSSALPPATSPTAPESYSQYPVP), 542–568 (EQSADGHKDTGASSKEGKEKKEKHKTK), and 634–675 (DLPK…EEKL). The span at 430–446 (YQQSAEGSSGQGTATNS) shows a compositional bias: polar residues. The segment covering 463–484 (SPTHPSSALPPATSPTAPESYS) has biased composition (low complexity). Basic and acidic residues predominate over residues 545 to 561 (ADGHKDTGASSKEGKEK). 5 positions are modified to phosphoserine: serine 640, serine 645, serine 655, serine 658, and serine 660. Positions 665–675 (ERGGPEREEKL) are enriched in basic and acidic residues. Residues 681–706 (LACLLCRRQFPSKEALIRHQQLSGLH) form a C2H2-type; atypical zinc finger. Serine 703, serine 719, and serine 767 each carry phosphoserine. The disordered stretch occupies residues 740–783 (AAERREKYGIPEPPEPKRRKYGGISTASVDFEQPTRDGLGSDNI). A G-patch domain is found at 780–826 (SDNIGSRMLQAMGWKEGSGLGRKKQGIVTPIEAQTRVRGSGLGARGS). Position 824 is an omega-N-methylarginine (arginine 824).

In terms of assembly, associates with the spliceosome. Component of a large chromatin remodeling complex, at least composed of MYSM1, PCAF, RBM10 and KIF11/TRIP5.

It is found in the nucleus. Binds to ssRNA containing the consensus sequence 5'-AGGUAA-3'. May be involved in post-transcriptional processing, most probably in mRNA splicing. Binds to RNA homopolymers, with a preference for poly(G) and poly(U) and little for poly(A). May bind to specific miRNA hairpins. The polypeptide is RNA-binding protein 10 (Rattus norvegicus (Rat)).